Consider the following 143-residue polypeptide: Putative pre-16S rRNA nuclease (143 aa).

The protein belongs to the YqgF nuclease family.

The protein resides in the cytoplasm. Its function is as follows. Could be a nuclease involved in processing of the 5'-end of pre-16S rRNA. This chain is Putative pre-16S rRNA nuclease, found in Leuconostoc citreum (strain KM20).